We begin with the raw amino-acid sequence, 850 residues long: Response regulator sskA (850 aa).

Disordered stretches follow at residues 1-225 (MPDR…GASS) and 419-542 (IPQR…GQSP). The span at 7-25 (SQLLKSKLLRRSSTTATTS) shows a compositional bias: low complexity. Positions 117–138 (GANSRQEGSQNGSIQQSPTFTR) are enriched in polar residues. A compositionally biased stretch (basic and acidic residues) spans 144-163 (QLTEEKDKGKLQSREGDQRG). Residues 177–196 (SDPQYSLTTELANKPSTPQT) are compositionally biased toward polar residues. Basic and acidic residues predominate over residues 436–445 (HHSEPGEHGE). Residues 477 to 490 (PSISILTTDSNMAS) are compositionally biased toward polar residues. Positions 492–511 (PQPPVAAPQVPTPPGPPPES) are enriched in pro residues. Positions 558-719 (NVLIVEDNII…WLEQKVTEWG (162 aa)) constitute a Response regulatory domain. Position 607 is a 4-aspartylphosphate (aspartate 607). Residues 736–850 (FADEPQSSSP…DEEQQALDAT (115 aa)) are disordered. The span at 762 to 782 (SSRTSTSPSSAAVNATARAFA) shows a compositional bias: low complexity. The span at 819–828 (TLDSPASPLT) shows a compositional bias: polar residues. A compositionally biased stretch (acidic residues) spans 839–850 (PGDEEQQALDAT).

The protein belongs to the SSK1 family.

It is found in the cytoplasm. Its function is as follows. Final receptor of the osmolarity two-component system regulatory system, which controls activity of the sakA mitogen-activated protein kinase (MAPK) pathway in response to changes in the osmolarity of the extracellular environment. Regulates the germination in the airways that drives enhanced disease initiation and inflammation in the lungs. In Aspergillus fumigatus (strain ATCC MYA-4609 / CBS 101355 / FGSC A1100 / Af293) (Neosartorya fumigata), this protein is Response regulator sskA.